The primary structure comprises 248 residues: UPF0246 protein A1G_03985 (248 aa).

Belongs to the UPF0246 family.

This chain is UPF0246 protein A1G_03985, found in Rickettsia rickettsii (strain Sheila Smith).